We begin with the raw amino-acid sequence, 428 residues long: Divergent protein kinase domain 1A (428 aa).

The Cytoplasmic segment spans residues 1–27 (MARSLCPGAWLRKPYYLQARFSYVRMK). The helical transmembrane segment at 28-48 (YLFFSWLVVFVGSWIIYVQYS) threads the bilayer. At 49–428 (TYTELCRGKD…WKKISYTNDS (380 aa)) the chain is on the lumenal side.

This sequence belongs to the DIPK family. In terms of processing, among the many cysteines in the lumenal domain, most are probably involved in disulfide bonds.

The protein localises to the endoplasmic reticulum membrane. The protein is Divergent protein kinase domain 1A of Homo sapiens (Human).